The chain runs to 65 residues: DNA-directed RNA polymerase subunit Rpo10 (65 aa).

The Zn(2+) site is built by C7, C10, C44, and C45.

The protein belongs to the archaeal Rpo10/eukaryotic RPB10 RNA polymerase subunit family. In terms of assembly, part of the RNA polymerase complex. Zn(2+) serves as cofactor.

It localises to the cytoplasm. The enzyme catalyses RNA(n) + a ribonucleoside 5'-triphosphate = RNA(n+1) + diphosphate. In terms of biological role, DNA-dependent RNA polymerase (RNAP) catalyzes the transcription of DNA into RNA using the four ribonucleoside triphosphates as substrates. The protein is DNA-directed RNA polymerase subunit Rpo10 of Pyrococcus furiosus (strain ATCC 43587 / DSM 3638 / JCM 8422 / Vc1).